We begin with the raw amino-acid sequence, 159 residues long: GDP-mannose mannosyl hydrolase (159 aa).

Substrate-binding positions include 2-3 (FL), phenylalanine 8, and arginine 36. One can recognise a Nudix hydrolase domain in the interval 13–153 (RSTPLVSLDF…SRAYFLAEKR (141 aa)). Glycine 49, glutamate 69, and glutamine 122 together coordinate Mg(2+). A Nudix box motif is present at residues 50–71 (GRVQKDETLEAAFERLTMAELG).

In terms of assembly, homodimer. Mg(2+) serves as cofactor.

The catalysed reaction is GDP-alpha-D-mannose + H2O = D-mannose + GDP + H(+). Its function is as follows. Hydrolyzes both GDP-mannose and GDP-glucose. Could participate in the regulation of cell wall biosynthesis by influencing the concentration of GDP-mannose or GDP-glucose in the cell. Might also be involved in the biosynthesis of the slime polysaccharide colanic acid. The polypeptide is GDP-mannose mannosyl hydrolase (Escherichia coli (strain K12)).